Reading from the N-terminus, the 873-residue chain is Zinc fingers and homeoboxes protein 1 (873 aa).

The disordered stretch occupies residues 1–63; sequence MASRRKSTTP…ESVDSDNQQN (63 aa). The span at 18-30 shows a compositional bias: acidic residues; it reads QDPDLELISDLEE. Residue Thr36 is modified to Phosphothreonine. Ser45, Ser47, and Ser48 each carry phosphoserine. C2H2-type zinc fingers lie at residues 70-93 and 102-125; these read YECKYCTFQTPDLNMFTFHVDSEH and YVCVECNFLTKRYDALSEHNLKYH. Residue Lys159 forms a Glycyl lysine isopeptide (Lys-Gly) (interchain with G-Cter in SUMO2) linkage. Residues 198-247 are disordered; the sequence is VHHNSAEGTSEEKENGVKASREENAENTSSSASESNTSTSTVNQVHPSPA. Ser202 is subject to Phosphoserine. The span at 207–221 shows a compositional bias: basic and acidic residues; sequence SEEKENGVKASREEN. A compositionally biased stretch (low complexity) spans 223–238; sequence ENTSSSASESNTSTST. The interval 272–432 is required for dimerization; it reads NSNLVPKVLI…QTNVQKSQVP (161 aa). Positions 272 to 564 are required for interaction with NFYA; that stretch reads NSNLVPKVLI…SQPKQSWNPF (293 aa). Residues 284-346 constitute a DNA-binding region (homeobox 1); that stretch reads NSIPTYNAAL…LKHGVSWTPE (63 aa). Residues 430–455 form a disordered region; the sequence is QVPAAQPAAETKPATAAVPSSPSVRP. Glycyl lysine isopeptide (Lys-Gly) (interchain with G-Cter in SUMO2) cross-links involve residues Lys441 and Lys485. The homeobox 2 DNA-binding region spans 464 to 526; it reads SFGIRAKKTK…YNQRNSKSNQ (63 aa). 3 disordered regions span residues 540–568, 627–664, and 731–767; these read IDSSDETPEPPAAAASQPKQSWNPFPDFA, DEKVEVDESNVGSSKEEPGENSPGDEAVAPKSAGTGKI, and SSSLNGLSSLRKRGRGRPKGRGRGRPRGRPRGGKRMN. Over residues 551-560 the composition is skewed to low complexity; that stretch reads AAAASQPKQS. The segment at residues 569 to 631 is a DNA-binding region (homeobox 3); it reads PQKFKEKTAE…TKALKDEKVE (63 aa). A Glycyl lysine isopeptide (Lys-Gly) (interchain with G-Cter in SUMO2) cross-link involves residue Lys629. Ser648 bears the Phosphoserine mark. The segment at residues 660 to 722 is a DNA-binding region (homeobox 4); that stretch reads GTGKICKKTP…YAWKNGNLKW (63 aa). Residues 734–768 form a required for nuclear localization region; it reads LNGLSSLRKRGRGRPKGRGRGRPRGRPRGGKRMNT. Residues 740–764 are compositionally biased toward basic residues; the sequence is LRKRGRGRPKGRGRGRPRGRPRGGK. The residue at position 774 (Ser774) is a Phosphoserine. Positions 777-832 form a DNA-binding region, homeobox 5; sequence KFKTGTAILKDYYLKHKFLNEQDLDELVNRSHMGYEQVREWFAERQRRSELGIELF. The tract at residues 829–873 is disordered; sequence IELFEENEEEDEVIDDQEEDEEETDDSDTWEPPRHVKRKLSKSDD. Acidic residues predominate over residues 831–857; the sequence is LFEENEEEDEVIDDQEEDEEETDDSDT. A required for repressor activity region spans residues 831–873; sequence LFEENEEEDEVIDDQEEDEEETDDSDTWEPPRHVKRKLSKSDD. Over residues 863 to 873 the composition is skewed to basic residues; it reads HVKRKLSKSDD.

Belongs to the ZHX family. In terms of assembly, forms homodimers. Heterodimer (via HD1 domain) with ZHX2 (via HD1 domain). Also forms a heterodimer with ZHX3 which is a prerequisite for repressor activity. Interacts with ATF7IP and NFYA. Interacts (via homeobox domains) with DNMT3B (via PWWP domain). In terms of tissue distribution, ubiquitously expressed.

Its subcellular location is the nucleus. Functionally, acts as a transcriptional repressor. Increases DNMT3B-mediated repressive transcriptional activity when DNMT3B is tethered to DNA. May link molecule between DNMT3B and other co-repressor proteins. This is Zinc fingers and homeoboxes protein 1 (Zhx1) from Rattus norvegicus (Rat).